Consider the following 87-residue polypeptide: Large ribosomal subunit protein bL27 (87 aa).

Residues 1–22 (MAHKKAGGSSRNGRDSQGQRRG) are disordered.

It belongs to the bacterial ribosomal protein bL27 family.

This chain is Large ribosomal subunit protein bL27, found in Nitratidesulfovibrio vulgaris (strain DP4) (Desulfovibrio vulgaris).